A 410-amino-acid chain; its full sequence is Cysteine desulfurase IscS (410 aa).

Residues 80–81 (AT), N160, Q188, and 208–210 (SGH) each bind pyridoxal 5'-phosphate. K211 is subject to N6-(pyridoxal phosphate)lysine. Residue T248 participates in pyridoxal 5'-phosphate binding. C334 (cysteine persulfide intermediate) is an active-site residue. A [2Fe-2S] cluster-binding site is contributed by C334.

This sequence belongs to the class-V pyridoxal-phosphate-dependent aminotransferase family. NifS/IscS subfamily. As to quaternary structure, homodimer. Forms a heterotetramer with IscU, interacts with other sulfur acceptors. Pyridoxal 5'-phosphate is required as a cofactor.

The protein resides in the cytoplasm. The catalysed reaction is (sulfur carrier)-H + L-cysteine = (sulfur carrier)-SH + L-alanine. It participates in cofactor biosynthesis; iron-sulfur cluster biosynthesis. Master enzyme that delivers sulfur to a number of partners involved in Fe-S cluster assembly, tRNA modification or cofactor biosynthesis. Catalyzes the removal of elemental sulfur atoms from cysteine to produce alanine. Functions as a sulfur delivery protein for Fe-S cluster synthesis onto IscU, an Fe-S scaffold assembly protein, as well as other S acceptor proteins. The chain is Cysteine desulfurase IscS from Rickettsia felis (strain ATCC VR-1525 / URRWXCal2) (Rickettsia azadi).